The following is a 243-amino-acid chain: 3-deoxy-manno-octulosonate cytidylyltransferase (243 aa).

This sequence belongs to the KdsB family.

The protein resides in the cytoplasm. The enzyme catalyses 3-deoxy-alpha-D-manno-oct-2-ulosonate + CTP = CMP-3-deoxy-beta-D-manno-octulosonate + diphosphate. The protein operates within nucleotide-sugar biosynthesis; CMP-3-deoxy-D-manno-octulosonate biosynthesis; CMP-3-deoxy-D-manno-octulosonate from 3-deoxy-D-manno-octulosonate and CTP: step 1/1. It functions in the pathway bacterial outer membrane biogenesis; lipopolysaccharide biosynthesis. Its function is as follows. Activates KDO (a required 8-carbon sugar) for incorporation into bacterial lipopolysaccharide in Gram-negative bacteria. This Helicobacter pylori (strain P12) protein is 3-deoxy-manno-octulosonate cytidylyltransferase.